Consider the following 298-residue polypeptide: Small ribosomal subunit protein uS3 (298 aa).

A KH type-2 domain is found at 39-107 (VREYLKAKLK…PVAVNIEEVR (69 aa)). Residues 214-298 (PAAVEARTDE…PAAAADGKGE (85 aa)) are disordered. The span at 219–245 (ARTDEERRPRGPRRDDRGARPGADRPA) shows a compositional bias: basic and acidic residues. Over residues 277–298 (KPAVQRVRKVAAPAAAADGKGE) the composition is skewed to low complexity.

This sequence belongs to the universal ribosomal protein uS3 family. As to quaternary structure, part of the 30S ribosomal subunit. Forms a tight complex with proteins S10 and S14.

Binds the lower part of the 30S subunit head. Binds mRNA in the 70S ribosome, positioning it for translation. The polypeptide is Small ribosomal subunit protein uS3 (Albidiferax ferrireducens (strain ATCC BAA-621 / DSM 15236 / T118) (Rhodoferax ferrireducens)).